Consider the following 269-residue polypeptide: Hydroxyacylglutathione hydrolase (269 aa).

7 residues coordinate Zn(2+): His-56, His-58, Asp-60, His-61, His-115, Asp-137, and His-177.

This sequence belongs to the metallo-beta-lactamase superfamily. Glyoxalase II family. Monomer. The cofactor is Zn(2+).

The enzyme catalyses an S-(2-hydroxyacyl)glutathione + H2O = a 2-hydroxy carboxylate + glutathione + H(+). It functions in the pathway secondary metabolite metabolism; methylglyoxal degradation; (R)-lactate from methylglyoxal: step 2/2. Its function is as follows. Thiolesterase that catalyzes the hydrolysis of S-D-lactoyl-glutathione to form glutathione and D-lactic acid. The chain is Hydroxyacylglutathione hydrolase from Leptospira borgpetersenii serovar Hardjo-bovis (strain JB197).